Consider the following 120-residue polypeptide: Large ribosomal subunit protein uL18 (120 aa).

Belongs to the universal ribosomal protein uL18 family. As to quaternary structure, part of the 50S ribosomal subunit; part of the 5S rRNA/L5/L18/L25 subcomplex. Contacts the 5S and 23S rRNAs.

Its function is as follows. This is one of the proteins that bind and probably mediate the attachment of the 5S RNA into the large ribosomal subunit, where it forms part of the central protuberance. This is Large ribosomal subunit protein uL18 from Methylobacterium nodulans (strain LMG 21967 / CNCM I-2342 / ORS 2060).